Consider the following 506-residue polypeptide: Ribose import ATP-binding protein RbsA 2 (506 aa).

2 consecutive ABC transporter domains span residues 6 to 241 (LSMT…VGRV) and 254 to 499 (EKSN…SITI). ATP is bound at residue 38 to 45 (GENGAGKS).

It belongs to the ABC transporter superfamily. Ribose importer (TC 3.A.1.2.1) family. In terms of assembly, the complex is composed of an ATP-binding protein (RbsA), two transmembrane proteins (RbsC) and a solute-binding protein (RbsB).

It is found in the cell inner membrane. The catalysed reaction is D-ribose(out) + ATP + H2O = D-ribose(in) + ADP + phosphate + H(+). Functionally, part of the ABC transporter complex RbsABC involved in ribose import. Responsible for energy coupling to the transport system. The protein is Ribose import ATP-binding protein RbsA 2 of Agrobacterium fabrum (strain C58 / ATCC 33970) (Agrobacterium tumefaciens (strain C58)).